Here is a 178-residue protein sequence, read N- to C-terminus: Interleukin-10 (178 aa).

Residues 1–18 (MHSSALLCCLVFLAGVAA) form the signal peptide. 2 cysteine pairs are disulfide-bonded: Cys30-Cys126 and Cys80-Cys132. N-linked (GlcNAc...) asparagine glycosylation occurs at Asn134.

It belongs to the IL-10 family. As to quaternary structure, homodimer. Interacts with IL10RA and IL10RB.

It localises to the secreted. In terms of biological role, major immune regulatory cytokine that acts on many cells of the immune system where it has profound anti-inflammatory functions, limiting excessive tissue disruption caused by inflammation. Mechanistically, IL10 binds to its heterotetrameric receptor comprising IL10RA and IL10RB leading to JAK1 and STAT2-mediated phosphorylation of STAT3. In turn, STAT3 translocates to the nucleus where it drives expression of anti-inflammatory mediators. Targets antigen-presenting cells (APCs) such as macrophages and monocytes and inhibits their release of pro-inflammatory cytokines including granulocyte-macrophage colony-stimulating factor /GM-CSF, granulocyte colony-stimulating factor/G-CSF, IL-1 alpha, IL-1 beta, IL-6, IL-8 and TNF-alpha. Also interferes with antigen presentation by reducing the expression of MHC-class II and co-stimulatory molecules, thereby inhibiting their ability to induce T cell activation. In addition, controls the inflammatory response of macrophages by reprogramming essential metabolic pathways including mTOR signaling. The sequence is that of Interleukin-10 (IL10) from Bos taurus (Bovine).